Consider the following 302-residue polypeptide: Mitochondrial glycine transporter (302 aa).

Solcar repeat units lie at residues 22 to 112 (HPVF…LKHH), 119 to 203 (PKPL…AKKL), and 213 to 297 (FSPV…MMEK). 6 consecutive transmembrane segments (helical) span residues 28 to 53 (FVCG…TRIQ), 87 to 113 (GVSP…KHHF), 125 to 150 (VMLG…TRYE), 178 to 201 (GLTA…TRAK), 217 to 243 (LNFS…KTHM), and 272 to 290 (GGVP…AWTV).

It belongs to the mitochondrial carrier (TC 2.A.29) family. SLC25A38 subfamily.

It localises to the mitochondrion inner membrane. The catalysed reaction is glycine(in) = glycine(out). Mitochondrial glycine transporter that imports glycine into the mitochondrial matrix. Plays an important role in providing glycine for the first enzymatic step in heme biosynthesis, the condensation of glycine with succinyl-CoA to produce 5-aminolevulinate (ALA) in the mitochondrial matrix. Required during erythropoiesis. Functionally, may play a role as pro-apoptotic protein that induces caspase-dependent apoptosis. This chain is Mitochondrial glycine transporter, found in Xenopus laevis (African clawed frog).